The sequence spans 384 residues: 5-amino-6-(D-ribitylamino)uracil--L-tyrosine 4-hydroxyphenyl transferase 2 (384 aa).

A Radical SAM core domain is found at 53-286 (VSYVVNRNIY…IAISRIILHT (234 aa)). [4Fe-4S] cluster-binding residues include cysteine 67, cysteine 71, and cysteine 74.

The protein belongs to the radical SAM superfamily. CofH family. As to quaternary structure, consists of two subunits, CofG and CofH. [4Fe-4S] cluster is required as a cofactor.

The catalysed reaction is 5-amino-6-(D-ribitylamino)uracil + L-tyrosine + S-adenosyl-L-methionine = 5-amino-5-(4-hydroxybenzyl)-6-(D-ribitylimino)-5,6-dihydrouracil + 2-iminoacetate + 5'-deoxyadenosine + L-methionine + H(+). Its pathway is cofactor biosynthesis; coenzyme F0 biosynthesis. In terms of biological role, catalyzes the radical-mediated synthesis of 5-amino-5-(4-hydroxybenzyl)-6-(D-ribitylimino)-5,6-dihydrouracil from 5-amino-6-(D-ribitylamino)uracil and L-tyrosine. This is 5-amino-6-(D-ribitylamino)uracil--L-tyrosine 4-hydroxyphenyl transferase 2 from Methanosarcina acetivorans (strain ATCC 35395 / DSM 2834 / JCM 12185 / C2A).